The chain runs to 850 residues: Vacuolar membrane protease (850 aa).

Residues 1 to 20 (MASSRAQWFNPIAFTPWPVT) lie on the Cytoplasmic side of the membrane. Residues 21 to 41 (CITTIVYLALLIPILVINLVV) form a helical membrane-spanning segment. Residues 42–282 (PSAPETNPKG…DGKSKDQNKV (241 aa)) are Vacuolar-facing. N-linked (GlcNAc...) asparagine glycosylation is found at Asn-53, Asn-116, and Asn-119. Zn(2+)-binding residues include His-175 and Asp-187. Glu-221 serves as the catalytic Proton acceptor. Residue Glu-222 coordinates Zn(2+). A helical membrane pass occupies residues 283-303 (NSGTGTLGVWFDMFGTAFAVF). Residues 304–308 (RLHTL) are Cytoplasmic-facing. A helical transmembrane segment spans residues 309–329 (FAISVALLVIAPLVIFVTSVI). Residues 330–363 (LSKTDRMYLFSMSKSLEGTGDQVSLRGLRGFSRT) lie on the Vacuolar side of the membrane. Residues 364-384 (PIILVIATTIPICLAYLLEKV) form a helical membrane-spanning segment. Topologically, residues 385-393 (NPYIVHSSQ) are cytoplasmic. A helical membrane pass occupies residues 394 to 414 (FSVWSMMFSAWIFLAWFLACA). Over 415–425 (ADFFRPSALHR) the chain is Vacuolar. A helical transmembrane segment spans residues 426–446 (AYSYTWIFIATWIMLVINTVY). Residues 447–529 (ANQKGIAAGP…TLPRWTWVLQ (83 aa)) lie on the Cytoplasmic side of the membrane. Residues 530–550 (LLLLAPIVLILVGQLALFLTA) form a helical membrane-spanning segment. Residues 551-563 (SMCQVGSDGVSTF) are Vacuolar-facing. The chain crosses the membrane as a helical span at residues 564–584 (VVYLACSVFTTLLCIPLFPLI). The Cytoplasmic segment spans residues 585 to 590 (HRFTYH). A helical membrane pass occupies residues 591-611 (IPTFLFLVFIGTLIYNLVAFP). Residues 612–850 (FSPANRLKTF…VEASHSFTIQ (239 aa)) are Vacuolar-facing. N-linked (GlcNAc...) asparagine glycosylation is found at Asn-630, Asn-658, and Asn-702.

It belongs to the peptidase M28 family. It depends on Zn(2+) as a cofactor.

The protein resides in the vacuole membrane. In terms of biological role, may be involved in vacuolar sorting and osmoregulation. The sequence is that of Vacuolar membrane protease from Ajellomyces capsulatus (strain NAm1 / WU24) (Darling's disease fungus).